Here is a 68-residue protein sequence, read N- to C-terminus: Negative regulatory protein YxlD (68 aa).

Helical transmembrane passes span 5 to 25 and 37 to 57; these read EIII…FLFI and WGIV…FFVI.

It is found in the cell membrane. Its function is as follows. Together with YxlE, is important for negative regulation of sigma Y activity, being the major negative regulator. The polypeptide is Negative regulatory protein YxlD (yxlD) (Bacillus subtilis (strain 168)).